Reading from the N-terminus, the 137-residue chain is Small ribosomal subunit protein uS12 (137 aa).

2 disordered regions span residues 1–21 (MPTINQLVRKPRKSKIEKSDS) and 34–57 (VHTKLAAPQKRGVATRVGTMTPKK). At D102 the chain carries 3-methylthioaspartic acid.

It belongs to the universal ribosomal protein uS12 family. As to quaternary structure, part of the 30S ribosomal subunit. Contacts proteins S8 and S17. May interact with IF1 in the 30S initiation complex.

Its function is as follows. With S4 and S5 plays an important role in translational accuracy. In terms of biological role, interacts with and stabilizes bases of the 16S rRNA that are involved in tRNA selection in the A site and with the mRNA backbone. Located at the interface of the 30S and 50S subunits, it traverses the body of the 30S subunit contacting proteins on the other side and probably holding the rRNA structure together. The combined cluster of proteins S8, S12 and S17 appears to hold together the shoulder and platform of the 30S subunit. The sequence is that of Small ribosomal subunit protein uS12 from Streptococcus equi subsp. zooepidemicus (strain H70).